We begin with the raw amino-acid sequence, 277 residues long: Zinc finger protein 511 (277 aa).

3 consecutive C2H2-type zinc fingers follow at residues phenylalanine 96–histidine 121, asparagine 123–histidine 146, and tyrosine 160–histidine 185. The tract at residues glutamate 225–methionine 244 is disordered.

Belongs to the krueppel C2H2-type zinc-finger protein family.

Its subcellular location is the nucleus. In terms of biological role, may be involved in transcriptional regulation. The sequence is that of Zinc finger protein 511 (znf511) from Danio rerio (Zebrafish).